The sequence spans 1210 residues: MNDDNSDRTEDGSRYVFIRDKNSNPSEYYQTSLSAQCPSVSHGDWNSDNPDAMVVDYEMDPAVDSSESVSLSHQCVEELAYPEPSSDFMGKHEFTMYSELTCQSPALVNTGKPQDLHSNCDSLEAIQDEKFDPLKPCECRSDDDYACGDSPEVLELKQTYGMKVDTANYTFIARHDIEQGQPLHAPGGLQTTVRDRNALSSCGRTPPHSSKMYVRGVNYNRENFENLQATPSKTLNTTFTVISDVLMQTDSPDVGVQGQNSLGNVTKEYTDGTRRGLIGEKEIQAVTLVSDGMEVPNGSASQEFYCVSEDDPNSETHSHGPYAQQEMGQNLRGTLPNCHVDGECPVLVPAFEKSKTRVLGSECKVTVTEDPHIDSHDNDSDIQSSTEELTLRSVSGQRGSPYEMGWGENGGAICTDKAGCMSTPVEQPPNLSFRLEPAEVKKYNNVENGPRDAKRAPNLKGEPTNMPKPNLGKSATKTNTTVGSKVRKTEIISYPTPNFKNIKAKVISRSVLQPKDTSIMKDTPSPQVTGGSSPSPGPSKHLTMMNKAPRSDFKASKKAEIPINKTHKQQFNKLITSQAAQVTTHSKNASLGVPRTTSATKSNQENVDKTGSPHAGSETGSVAAFFQKIKGILPVKMKSSECLEVTYVSHIDQISPEKGEQDGEAPMEKQELGKQATNEIFESKSLLVGSAPKTSTTPGRSSSKPDSRSLRKTPGLKAKVGPTAACLRRKSESRTLGSDRALSPQRIRRVSGSGGHAAINKYEEKPPKQAFQNGSGPLYLKPLVPRAHSHLLKTSPKGPSRKSLFTAFNSVEKGRQKNPRSLCIQTQTAPDVLSSERTLELAQYKTKCESQSGFILHLRQLLSRGNTKFEALTVVIQHLLSEREEALKQHKTLSQELVSLRGELVAASSACEKLEKARADLQTAYQEFVQKLNQQHQTDRTELENRLKDLYTAECEKLQSIYIEEAEKYKTQLQEQFDNLNAAHETTKLEIEASHSEKVELLKKTYETSLSEIKKSHEMEKKSLEDLLNEKQESLEKQINDLKSENDALNERLKSEEQKQLSREKANSKNPQVMYLEQELESLKAVLEIKNEKLHQQDMKLMKMEKLVDNNTALVDKLKRFQQENEELKARMDKHMAISRQLSTEQAALQESLEKESKVNKRLSMENEELLWKLHNGDLCSPKRSPTSSAIPFQSPRNSGSFSSPSISPR.

Disordered stretches follow at residues 1 to 21, 370 to 404, 446 to 482, 513 to 545, and 585 to 618; these read MNDD…IRDK, DPHI…PYEM, VENG…NTTV, QPKD…LTMM, and HSKN…AGSE. Residues 370 to 379 show a composition bias toward basic and acidic residues; it reads DPHIDSHDND. Ser375, Ser380, and Ser393 each carry phosphoserine. A compositionally biased stretch (polar residues) spans 381 to 398; that stretch reads DIQSSTEELTLRSVSGQR. Basic and acidic residues predominate over residues 446–455; sequence VENGPRDAKR. A compositionally biased stretch (polar residues) spans 473–482; sequence KSATKTNTTV. Positions 524–534 are enriched in low complexity; it reads PSPQVTGGSSP. Residues 585–605 are compositionally biased toward polar residues; it reads HSKNASLGVPRTTSATKSNQE. A Phosphoserine modification is found at Ser621. The disordered stretch occupies residues 683 to 771; it reads SKSLLVGSAP…YEEKPPKQAF (89 aa). The segment covering 692–702 has biased composition (polar residues); the sequence is PKTSTTPGRSS. Residues 876–1171 are a coiled coil; sequence IQHLLSEREE…RLSMENEELL (296 aa). 9 positions are modified to phosphoserine: Ser1143, Ser1164, Ser1185, Ser1195, Ser1199, Ser1201, Ser1203, Ser1204, and Ser1208. The interval 1177–1210 is disordered; the sequence is GDLCSPKRSPTSSAIPFQSPRNSGSFSSPSISPR. Low complexity predominate over residues 1195–1210; sequence SPRNSGSFSSPSISPR.

Belongs to the MTUS1 family. As to quaternary structure, homodimer. Interacts with AGTR2. Interacts with PTPN6. Ubiquitously expressed, with highest levels in uterus and adrenal gland.

It is found in the mitochondrion. The protein localises to the golgi apparatus. Its subcellular location is the cell membrane. It localises to the nucleus. Cooperates with AGTR2 to inhibit ERK2 activation and cell proliferation. May be required for AGTR2 cell surface expression. Together with PTPN6, induces UBE2V2 expression upon angiotensin-II stimulation. This is Microtubule-associated tumor suppressor 1 homolog (Mtus1) from Mus musculus (Mouse).